The primary structure comprises 174 residues: Crossover junction endodeoxyribonuclease RuvC (174 aa).

Residues aspartate 8, glutamate 69, and aspartate 141 contribute to the active site. The Mg(2+) site is built by aspartate 8, glutamate 69, and aspartate 141.

This sequence belongs to the RuvC family. As to quaternary structure, homodimer which binds Holliday junction (HJ) DNA. The HJ becomes 2-fold symmetrical on binding to RuvC with unstacked arms; it has a different conformation from HJ DNA in complex with RuvA. In the full resolvosome a probable DNA-RuvA(4)-RuvB(12)-RuvC(2) complex forms which resolves the HJ. Mg(2+) is required as a cofactor.

The protein resides in the cytoplasm. It carries out the reaction Endonucleolytic cleavage at a junction such as a reciprocal single-stranded crossover between two homologous DNA duplexes (Holliday junction).. In terms of biological role, the RuvA-RuvB-RuvC complex processes Holliday junction (HJ) DNA during genetic recombination and DNA repair. Endonuclease that resolves HJ intermediates. Cleaves cruciform DNA by making single-stranded nicks across the HJ at symmetrical positions within the homologous arms, yielding a 5'-phosphate and a 3'-hydroxyl group; requires a central core of homology in the junction. The consensus cleavage sequence is 5'-(A/T)TT(C/G)-3'. Cleavage occurs on the 3'-side of the TT dinucleotide at the point of strand exchange. HJ branch migration catalyzed by RuvA-RuvB allows RuvC to scan DNA until it finds its consensus sequence, where it cleaves and resolves the cruciform DNA. The polypeptide is Crossover junction endodeoxyribonuclease RuvC (Xanthomonas euvesicatoria pv. vesicatoria (strain 85-10) (Xanthomonas campestris pv. vesicatoria)).